A 231-amino-acid polypeptide reads, in one-letter code: uncharacterized protein (231 aa).

A run of 6 helical transmembrane segments spans residues Y4–S24, S29–G49, A58–L78, T95–G115, V147–L167, and L211–V231.

The protein belongs to the YohK (E.coli)/YwbG (IPA-22R) (B.subtilis) family.

The protein localises to the cell membrane. This is an uncharacterized protein from Haemophilus influenzae (strain ATCC 51907 / DSM 11121 / KW20 / Rd).